The chain runs to 54 residues: Preprotein translocase subunit SecG (54 aa).

Topologically, residues 1 to 30 are cytoplasmic; it reads MSKNKQDAGLSTSAGLVRYMDEDASKIKIA. The helical transmembrane segment at 31–52 threads the bilayer; the sequence is PEKVLGITISIMVLLFILNYGL. At 53–54 the chain is on the extracellular side; it reads LA.

Belongs to the SEC61-beta family. As to quaternary structure, component of the protein translocase complex. Heterotrimer consisting of alpha (SecY), beta (SecG) and gamma (SecE) subunits. Can form oligomers of the heterotrimer.

It is found in the cell membrane. Functionally, involved in protein export. The function of the beta subunit is unknown, but it may be involved in stabilization of the trimeric complex. This Methanococcus aeolicus (strain ATCC BAA-1280 / DSM 17508 / OCM 812 / Nankai-3) protein is Preprotein translocase subunit SecG.